A 561-amino-acid chain; its full sequence is Zinc finger protein 394 (561 aa).

Phosphoserine is present on S12. K40 participates in a covalent cross-link: Glycyl lysine isopeptide (Lys-Gly) (interchain with G-Cter in SUMO2). Residues 43-62 form a disordered region; sequence EDSLGSWEPSYPAASPDPET. Residues 64–146 enclose the SCAN box domain; it reads RLHFRQLRYQ…AVVRALQRAL (83 aa). In terms of domain architecture, KRAB spans 155–230; the sequence is VTFEDMAVSL…LQEAFQGKRP (76 aa). Glycyl lysine isopeptide (Lys-Gly) (interchain with G-Cter in SUMO2) cross-links involve residues K203 and K228. Positions 238–247 are enriched in basic and acidic residues; that stretch reads THEDRVEKQS. Positions 238-283 are disordered; it reads THEDRVEKQSGDPLPLKLENSPEAEGFNSISDVNKNGSIEGEDSKN. K254 is covalently cross-linked (Glycyl lysine isopeptide (Lys-Gly) (interchain with G-Cter in SUMO2)). Polar residues predominate over residues 265-274; it reads NSISDVNKNG. K282 participates in a covalent cross-link: Glycyl lysine isopeptide (Lys-Gly) (interchain with G-Cter in SUMO2). 7 consecutive C2H2-type zinc fingers follow at residues 358–380, 386–408, 414–436, 442–463, 469–491, 497–519, and 525–547; these read YKCGNCGKSFKQRSDLFRHQRIH, YGCQECGKSFSQSAALTKHQRTH, YTCLKCGERFRQNSHLNRHQSTH, FKCEECGETCHISNLFRHQRLH, YKCEECEKSFKQRSDLFKHHRIH, YGCSVCGKRFNQSATLIKHQRIH, and YKCLECGERFRQSTHLIRHQRIH. K443 participates in a covalent cross-link: Glycyl lysine isopeptide (Lys-Gly) (interchain with G-Cter in SUMO2).

It belongs to the krueppel C2H2-type zinc-finger protein family.

Its subcellular location is the nucleus. In terms of biological role, may be involved in transcriptional regulation. The sequence is that of Zinc finger protein 394 (ZNF394) from Pan paniscus (Pygmy chimpanzee).